We begin with the raw amino-acid sequence, 184 residues long: Peptide deformylase (184 aa).

2 residues coordinate Fe cation: Cys111 and His154. Residue Glu155 is part of the active site. Fe cation is bound at residue His158.

It belongs to the polypeptide deformylase family. It depends on Fe(2+) as a cofactor.

The enzyme catalyses N-terminal N-formyl-L-methionyl-[peptide] + H2O = N-terminal L-methionyl-[peptide] + formate. Functionally, removes the formyl group from the N-terminal Met of newly synthesized proteins. Requires at least a dipeptide for an efficient rate of reaction. N-terminal L-methionine is a prerequisite for activity but the enzyme has broad specificity at other positions. The chain is Peptide deformylase from Lactobacillus delbrueckii subsp. bulgaricus (strain ATCC 11842 / DSM 20081 / BCRC 10696 / JCM 1002 / NBRC 13953 / NCIMB 11778 / NCTC 12712 / WDCM 00102 / Lb 14).